The primary structure comprises 34 residues: Photosystem II reaction center protein M (34 aa).

A helical transmembrane segment spans residues 5 to 25; sequence ILALIAVALFISIPTAFLVII.

The protein belongs to the PsbM family. PSII is composed of 1 copy each of membrane proteins PsbA, PsbB, PsbC, PsbD, PsbE, PsbF, PsbH, PsbI, PsbJ, PsbK, PsbL, PsbM, PsbT, PsbX, PsbY, PsbZ, Psb30/Ycf12, at least 3 peripheral proteins of the oxygen-evolving complex and a large number of cofactors. It forms dimeric complexes.

The protein localises to the plastid. Its subcellular location is the chloroplast thylakoid membrane. Functionally, one of the components of the core complex of photosystem II (PSII). PSII is a light-driven water:plastoquinone oxidoreductase that uses light energy to abstract electrons from H(2)O, generating O(2) and a proton gradient subsequently used for ATP formation. It consists of a core antenna complex that captures photons, and an electron transfer chain that converts photonic excitation into a charge separation. This subunit is found at the monomer-monomer interface. The sequence is that of Photosystem II reaction center protein M from Welwitschia mirabilis (Tree tumbo).